The chain runs to 630 residues: Protein phosphatase 2C-like domain-containing protein 1 (630 aa).

The PPM-type phosphatase domain occupies 170-621; sequence GVGICEDRNS…DNITVMVIFL (452 aa). The segment covering 557 to 569 has biased composition (basic and acidic residues); that stretch reads TTHRKPCSEKVTD. Positions 557-578 are disordered; sequence TTHRKPCSEKVTDRPTSVNDVA.

The protein belongs to the PP2C family.

This is Protein phosphatase 2C-like domain-containing protein 1 (PP2D1) from Homo sapiens (Human).